The sequence spans 196 residues: Large ribosomal subunit protein bL25 (196 aa).

It belongs to the bacterial ribosomal protein bL25 family. CTC subfamily. In terms of assembly, part of the 50S ribosomal subunit; part of the 5S rRNA/L5/L18/L25 subcomplex. Contacts the 5S rRNA. Binds to the 5S rRNA independently of L5 and L18.

Its function is as follows. This is one of the proteins that binds to the 5S RNA in the ribosome where it forms part of the central protuberance. The chain is Large ribosomal subunit protein bL25 from Geotalea daltonii (strain DSM 22248 / JCM 15807 / FRC-32) (Geobacter daltonii).